Here is a 161-residue protein sequence, read N- to C-terminus: Large ribosomal subunit protein uL30m (161 aa).

The N-terminal 34 residues, Met1–His34, are a transit peptide targeting the mitochondrion.

This sequence belongs to the universal ribosomal protein uL30 family. Component of the mitochondrial ribosome large subunit (39S) which comprises a 16S rRNA and about 50 distinct proteins.

The protein resides in the mitochondrion. The protein is Large ribosomal subunit protein uL30m (MRPL30) of Bos taurus (Bovine).